Reading from the N-terminus, the 340-residue chain is Adenosine kinase (340 aa).

Asp-292 is a catalytic residue.

It belongs to the carbohydrate kinase PfkB family. It depends on Mg(2+) as a cofactor.

The enzyme catalyses adenosine + ATP = AMP + ADP + H(+). It functions in the pathway purine metabolism; AMP biosynthesis via salvage pathway; AMP from adenosine: step 1/1. This chain is Adenosine kinase (ado1), found in Schizosaccharomyces pombe (strain 972 / ATCC 24843) (Fission yeast).